Consider the following 350-residue polypeptide: Protein FAM118B (350 aa).

Position 2 is an N-acetylalanine (Ala-2). The residue at position 9 (Ser-9) is a Phosphoserine.

Belongs to the FAM118 family.

The protein localises to the nucleus. It is found in the cajal body. May play a role in Cajal bodies formation. This is Protein FAM118B (FAM118B) from Macaca fascicularis (Crab-eating macaque).